The chain runs to 734 residues: MELRFPRFSQGLAQDPTTRRIWFGIATAHDFESHDDITEERLYQNIFASHFGQLAIIFLWTSGNLFHVAWQGNFESWIQDPLHVRPIAHAIWDPHFGQPAVEAFTRGGAAGPVNIAYSGVYQWWYTIGLRTNEDLYTGALFLLFLSTLSLIAGWLHLQPKWKPSLSWFKNAESRLNHHLSGLFGVSSLAWTGHLVHVAIPASRGEYVRWNNFLDVLPYPQGLGPLLTGQWNLYAQNPDSSNHLFGTAQGAGTAILTLLGGFHPQTQSLWLTDMAHHHLAIAFIFLIAGHMYRTNFGIGHSIKDLLEAHTPPGGRLGRGHKGLYDTINNSIHFQLGLALASLGVITSLVAQHMYSLPPYAFIAQDFTTQAALYTHHQYIAGFIMTGAFAHGAIFFIRDYNPEQNEDNVLARMLDHKEAIISHLSWASLFLGFHTLGLYVHNDVMLAFGTPEKQILIEPIFAQWIQSAHGKTTYGFDILLSSTNGPAFNAGRSLWLPGWLNAVNENSNSLFLTIGPGDFLVHHAIALGLHTTTLILVKGALDARGSKLMPDKKDFGYSFPCDGPGRGGTCDISAWDAFYLAVFWMLNTIGWVTFYWHWKHITLWQGNVSQFNESSTYLMGWLRDYLWLNSSQLINGYNPFGMNSLSVWAWMFLFGHLVWATGFMFLISWRGYWQELIETLAWAHERTPLANLIRWRDKPVALSIVQARLVGLAHFSVGYIFTYAAFLIASTSGKFG.

The next 8 membrane-spanning stretches (helical) occupy residues 46-69, 135-158, 175-199, 273-291, 330-353, 369-395, 417-439, and 517-535; these read IFAS…FHVA, LYTG…LHLQ, LNHH…HVAI, MAHH…GHMY, IHFQ…QHMY, AALY…IFFI, AIIS…LYVH, and FLVH…LILV. [4Fe-4S] cluster is bound by residues Cys-559 and Cys-568. The next 2 helical transmembrane spans lie at 575 to 596 and 643 to 665; these read AFYL…YWHW and LSVW…MFLI. Chlorophyll a is bound by residues His-654, Met-662, and Tyr-670. Trp-671 is a binding site for phylloquinone. A helical transmembrane segment spans residues 707–727; the sequence is LVGLAHFSVGYIFTYAAFLIA.

This sequence belongs to the PsaA/PsaB family. In terms of assembly, the PsaA/B heterodimer binds the P700 chlorophyll special pair and subsequent electron acceptors. PSI consists of a core antenna complex that captures photons, and an electron transfer chain that converts photonic excitation into a charge separation. The eukaryotic PSI reaction center is composed of at least 11 subunits. P700 is a chlorophyll a/chlorophyll a' dimer, A0 is one or more chlorophyll a, A1 is one or both phylloquinones and FX is a shared 4Fe-4S iron-sulfur center. serves as cofactor.

Its subcellular location is the plastid. The protein localises to the chloroplast thylakoid membrane. The enzyme catalyses reduced [plastocyanin] + hnu + oxidized [2Fe-2S]-[ferredoxin] = oxidized [plastocyanin] + reduced [2Fe-2S]-[ferredoxin]. Its function is as follows. PsaA and PsaB bind P700, the primary electron donor of photosystem I (PSI), as well as the electron acceptors A0, A1 and FX. PSI is a plastocyanin-ferredoxin oxidoreductase, converting photonic excitation into a charge separation, which transfers an electron from the donor P700 chlorophyll pair to the spectroscopically characterized acceptors A0, A1, FX, FA and FB in turn. Oxidized P700 is reduced on the lumenal side of the thylakoid membrane by plastocyanin. The protein is Photosystem I P700 chlorophyll a apoprotein A2 of Triticum aestivum (Wheat).